Reading from the N-terminus, the 272-residue chain is Indole-3-glycerol phosphate synthase (272 aa).

The protein belongs to the TrpC family.

It catalyses the reaction 1-(2-carboxyphenylamino)-1-deoxy-D-ribulose 5-phosphate + H(+) = (1S,2R)-1-C-(indol-3-yl)glycerol 3-phosphate + CO2 + H2O. The protein operates within amino-acid biosynthesis; L-tryptophan biosynthesis; L-tryptophan from chorismate: step 4/5. The chain is Indole-3-glycerol phosphate synthase from Mycolicibacterium gilvum (strain PYR-GCK) (Mycobacterium gilvum (strain PYR-GCK)).